We begin with the raw amino-acid sequence, 249 residues long: Pleckstrin homology domain-containing family F member 2 (249 aa).

In terms of domain architecture, PH spans 35–131; that stretch reads VLIGEGVLTK…WMNHINKCVS (97 aa). Residues 152 to 212 form an FYVE-type zinc finger; the sequence is DSEATVCMRC…ICDSCYDLLS (61 aa). Zn(2+)-binding residues include Cys-158, Cys-161, Cys-175, Cys-178, Cys-183, Cys-186, Cys-204, and Cys-207. Over residues 219–232 the composition is skewed to polar residues; sequence CQSTRSDSYSQSPK. The interval 219 to 249 is disordered; it reads CQSTRSDSYSQSPKSSLNDASDDDDDEDSSD. Acidic residues predominate over residues 238–249; the sequence is ASDDDDDEDSSD.

Its subcellular location is the early endosome membrane. It localises to the endoplasmic reticulum. Functionally, may play a role in early endosome fusion upstream of RAB5, hence regulating receptor trafficking and fluid-phase transport. Enhances cellular sensitivity to TNF-induced apoptosis. In Gallus gallus (Chicken), this protein is Pleckstrin homology domain-containing family F member 2 (PLEKHF2).